Reading from the N-terminus, the 135-residue chain is Large ribosomal subunit protein uL22c (135 aa).

Belongs to the universal ribosomal protein uL22 family. Part of the 50S ribosomal subunit.

Its subcellular location is the plastid. In terms of biological role, this protein binds specifically to 23S rRNA. Functionally, the globular domain of the protein is located near the polypeptide exit tunnel on the outside of the subunit, while an extended beta-hairpin is found that lines the wall of the exit tunnel in the center of the 70S ribosome. The sequence is that of Large ribosomal subunit protein uL22c (rpl22) from Cuscuta exaltata (Tall dodder).